We begin with the raw amino-acid sequence, 108 residues long: MSDAILYVSDDSFETDVLKSSKPVLVDFWAEWCGPCKMIAPILEEIADEYADRLRVAKFNIDENPNTPPQYAIRGIPTLLLFKAGKLEATKVGALSKAQLTAFLDSQL.

Residues 2 to 108 (SDAILYVSDD…QLTAFLDSQL (107 aa)) form the Thioredoxin domain. Cys33 and Cys36 form a disulfide bridge.

This sequence belongs to the thioredoxin family.

Its function is as follows. Component of the thioredoxin-thioredoxin reductase system. Participates in various redox reactions through the reversible oxidation of its active center dithiol to a disulfide and catalyzes dithiol-disulfide exchange reactions. The sequence is that of Thioredoxin (trxA) from Acidithiobacillus ferridurans.